A 175-amino-acid polypeptide reads, in one-letter code: Transcription factor HES-3 (175 aa).

The 49-residue stretch at 1–49 folds into the bHLH domain; that stretch reads MEKKRRARINVSLEQLRSLLERHYSHQIRKRKLEKADILELSVKYMRSL. Positions 65–98 constitute an Orange domain; sequence YPSGFQGGLRGVSQRLRPGEGDSGLRCPLLLQRR. The segment at 126-166 is disordered; sequence RAAGGSHSPQSPLPLPGGLLESSTDVVAPHPASNCQAESTR. The span at 129–148 shows a compositional bias: low complexity; that stretch reads GGSHSPQSPLPLPGGLLESS. The short motif at 172-175 is the WRPW motif element; sequence WRPW.

In terms of assembly, transcription repression requires formation of a complex with a corepressor protein of the Groucho/TLE family.

The protein resides in the nucleus. Functionally, transcriptional repressor of genes that require a bHLH protein for their transcription. In Mus musculus (Mouse), this protein is Transcription factor HES-3 (Hes3).